We begin with the raw amino-acid sequence, 941 residues long: ATP-dependent 6-phosphofructokinase subunit beta (941 aa).

The segment at Pro-2 to Ser-558 is N-terminal catalytic PFK domain 1. Residues Gly-191, Arg-255–Cys-256, and Gly-285–Ser-288 contribute to the ATP site. Asp-286 provides a ligand contact to Mg(2+). Beta-D-fructose 6-phosphate-binding positions include Ser-331–Asp-333, Arg-368, Met-375–Arg-377, Glu-432, Arg-460, and His-466–Arg-469. The Proton acceptor role is filled by Asp-333. The tract at residues Ala-559 to Lys-572 is interdomain linker. The interval Lys-573 to Leu-941 is C-terminal regulatory PFK domain 2. Beta-D-fructose 2,6-bisphosphate-binding positions include Arg-643, Thr-701–Asn-705, Arg-739, Gln-746–Gly-748, Glu-806, Lys-832, His-838–Gln-841, and Arg-918.

This sequence belongs to the phosphofructokinase type A (PFKA) family. ATP-dependent PFK group I subfamily. Eukaryotic two domain clade 'E' sub-subfamily. As to quaternary structure, heterododecamer of 4 alpha, 4 beta and 4 gamma chains. The gamma chain bridges the N-terminal halves of the alpha and beta subunits. Requires Mg(2+) as cofactor.

The protein localises to the cytoplasm. The catalysed reaction is beta-D-fructose 6-phosphate + ATP = beta-D-fructose 1,6-bisphosphate + ADP + H(+). The protein operates within carbohydrate degradation; glycolysis; D-glyceraldehyde 3-phosphate and glycerone phosphate from D-glucose: step 3/4. Its activity is regulated as follows. Allosterically activated by ADP, AMP, or fructose 2,6-bisphosphate, and allosterically inhibited by ATP or citrate. Functionally, catalyzes the phosphorylation of D-fructose 6-phosphate to fructose 1,6-bisphosphate by ATP, the first committing step of glycolysis. In Komagataella phaffii (strain GS115 / ATCC 20864) (Yeast), this protein is ATP-dependent 6-phosphofructokinase subunit beta (PFK2).